We begin with the raw amino-acid sequence, 442 residues long: MAAGTLYTYPENWRAFKAQIAAQYSGARLKIASAPPAFTFGQTNRSPAFLGNFPLGKVPAYQGDDGFCLFESNAIAHYLSNDVLRGSTPQASAQVLQWVSFADSEVIPPASAWVFPTLGIMQFNKQATEQAKEEVKRVLAVLNQHLNTRTFLVGERISLADITVVCSLLWLYKQVLEPAFRQPYPNVTRWFVTCVNQPQFKTVLGEVKLCEKMAQFDAKKFAEMQPKKEAPIKKEKGGKEGGKQQPQQQEKKEKKKEEKKAAPAEEEMDECEAALASEPKAKDPFAHLPKSSFVMDEFKRKYSNEDTMTVALPYFWDHFDREGFSIWYAEYRFPEELTMAFMSCNLITGMFQRLDKLRKNAFASVILFGANNDSCISGIWVFRGQDLAFPLSDDWQIDYESYTWRKLDVDSEECKTMVKEYFAWEGEFKHVGKPFNQGKIFK.

Residues 2-87 (AAGTLYTYPE…YLSNDVLRGS (86 aa)) form the GST N-terminal domain. The GST C-terminal domain maps to 88–216 (TPQASAQVLQ…VKLCEKMAQF (129 aa)). 2 stretches are compositionally biased toward basic and acidic residues: residues 227–242 (KKEA…KEGG) and 249–263 (QEKK…KAAP). The interval 227–273 (KKEAPIKKEKGGKEGGKQQPQQQEKKEKKKEEKKAAPAEEEMDECEA) is disordered. In terms of domain architecture, EF-1-gamma C-terminal spans 281 to 442 (AKDPFAHLPK…KPFNQGKIFK (162 aa)).

As to quaternary structure, EF-1 is composed of four subunits: alpha, beta, delta, and gamma.

Functionally, probably plays a role in anchoring the complex to other cellular components. This is Elongation factor 1-gamma (eef1g) from Danio rerio (Zebrafish).